Reading from the N-terminus, the 174-residue chain is DNA-directed RNA polymerase IV subunit 7 (174 aa).

The protein belongs to the eukaryotic RPB7/RPC8 RNA polymerase subunit family. Component of the RNA polymerase IV complex. Interacts with NRPD1.

Its subcellular location is the nucleus. Functionally, DNA-dependent RNA polymerase catalyzes the transcription of DNA into RNA using the four ribonucleoside triphosphates as substrates. Component of RNA polymerase IV which mediates 24-nt short-interfering RNAs (siRNA) accumulation. Implicated in siRNA-directed heterochromatin formation through the action of DCL3 and AGO4, and subsequent DNA methylation-dependent silencing of targeted sequences. Essential component of a self-reinforcing loop coupling de novo DNA methylation to siRNA production. Required for intercellular but not intracellular RNA interference (RNAi) leading to systemic post-transcriptional gene silencing. Involved in the maintenance of post-transcriptional RNA silencing. In Arabidopsis thaliana (Mouse-ear cress), this protein is DNA-directed RNA polymerase IV subunit 7 (NRPD7).